The primary structure comprises 504 residues: Glutamate--tRNA ligase (504 aa).

A 'HIGH' region motif is present at residues 9–19; sequence PSPTGDPHVGT. Residues 248-252 carry the 'KMSKS' region motif; sequence KISKR. Position 251 (Lys251) interacts with ATP.

The protein belongs to the class-I aminoacyl-tRNA synthetase family. Glutamate--tRNA ligase type 1 subfamily. In terms of assembly, monomer.

It localises to the cytoplasm. It catalyses the reaction tRNA(Glu) + L-glutamate + ATP = L-glutamyl-tRNA(Glu) + AMP + diphosphate. Catalyzes the attachment of glutamate to tRNA(Glu) in a two-step reaction: glutamate is first activated by ATP to form Glu-AMP and then transferred to the acceptor end of tRNA(Glu). In Acidothermus cellulolyticus (strain ATCC 43068 / DSM 8971 / 11B), this protein is Glutamate--tRNA ligase.